Reading from the N-terminus, the 335-residue chain is Anthranilate phosphoribosyltransferase (335 aa).

Residues G79, 82–83 (GD), T87, 89–92 (NVST), 107–115 (KHGSRSVSS), and S119 each bind 5-phospho-alpha-D-ribose 1-diphosphate. G79 is a binding site for anthranilate. S91 is a Mg(2+) binding site. R165 lines the anthranilate pocket. Mg(2+)-binding residues include D223 and E224.

Belongs to the anthranilate phosphoribosyltransferase family. As to quaternary structure, homodimer. Mg(2+) serves as cofactor.

It catalyses the reaction N-(5-phospho-beta-D-ribosyl)anthranilate + diphosphate = 5-phospho-alpha-D-ribose 1-diphosphate + anthranilate. The protein operates within amino-acid biosynthesis; L-tryptophan biosynthesis; L-tryptophan from chorismate: step 2/5. Its function is as follows. Catalyzes the transfer of the phosphoribosyl group of 5-phosphorylribose-1-pyrophosphate (PRPP) to anthranilate to yield N-(5'-phosphoribosyl)-anthranilate (PRA). In Helicobacter pylori (strain HPAG1), this protein is Anthranilate phosphoribosyltransferase.